Here is a 988-residue protein sequence, read N- to C-terminus: Mediator of RNA polymerase II transcription subunit 24 (988 aa).

6 short sequence motifs (LXXLL motif) span residues 128 to 132 (LNWLL), 341 to 345 (LTPLL), 445 to 449 (LDLLL), 555 to 559 (LVALL), 786 to 790 (LPSLL), and 856 to 860 (LMRLL).

The protein belongs to the Mediator complex subunit 24 family. Component of the Mediator complex.

The protein localises to the nucleus. Component of the Mediator complex, a coactivator involved in the regulated transcription of nearly all RNA polymerase II-dependent genes. Mediator functions as a bridge to convey information from gene-specific regulatory proteins to the basal RNA polymerase II transcription machinery. Mediator is recruited to promoters by direct interactions with regulatory proteins and serves as a scaffold for the assembly of a functional preinitiation complex with RNA polymerase II and the general transcription factors. This chain is Mediator of RNA polymerase II transcription subunit 24 (med24), found in Xenopus laevis (African clawed frog).